A 380-amino-acid polypeptide reads, in one-letter code: Cytochrome b (380 aa).

Helical transmembrane passes span 33-53 (FGSL…FLAM), 77-98 (WLIR…FIHV), 113-133 (WNIG…GYVL), and 178-198 (FFAF…VHLL). The heme b site is built by His83 and His97. 2 residues coordinate heme b: His182 and His196. His201 contributes to the a ubiquinone binding site. 4 helical membrane passes run 226–246 (IKDL…VLFF), 288–308 (LGGV…PLLN), 320–340 (ITQA…WIGG), and 347–367 (FTLI…IFMP).

This sequence belongs to the cytochrome b family. The cytochrome bc1 complex contains 11 subunits: 3 respiratory subunits (MT-CYB, CYC1 and UQCRFS1), 2 core proteins (UQCRC1 and UQCRC2) and 6 low-molecular weight proteins (UQCRH/QCR6, UQCRB/QCR7, UQCRQ/QCR8, UQCR10/QCR9, UQCR11/QCR10 and a cleavage product of UQCRFS1). This cytochrome bc1 complex then forms a dimer. Heme b is required as a cofactor.

It localises to the mitochondrion inner membrane. Component of the ubiquinol-cytochrome c reductase complex (complex III or cytochrome b-c1 complex) that is part of the mitochondrial respiratory chain. The b-c1 complex mediates electron transfer from ubiquinol to cytochrome c. Contributes to the generation of a proton gradient across the mitochondrial membrane that is then used for ATP synthesis. The protein is Cytochrome b (MT-CYB) of Rhipidomys wetzeli (Wetzel's climbing mouse).